The chain runs to 159 residues: MNKQISKKPAQRTIALNKKALHDYYVEQRFEAGLVLEGWEVKSIRAGRVQLRDSYVVFKGGEAWLIGAHLSPLPNVAEYMKADPQRSRKLLLNKREIGKLFGAVQKQGLTVVPLDLHWHKNHVKVEIVLAKGKKTHDKRETIKRREWEREKHRVLKSHG.

Belongs to the SmpB family.

The protein localises to the cytoplasm. In terms of biological role, required for rescue of stalled ribosomes mediated by trans-translation. Binds to transfer-messenger RNA (tmRNA), required for stable association of tmRNA with ribosomes. tmRNA and SmpB together mimic tRNA shape, replacing the anticodon stem-loop with SmpB. tmRNA is encoded by the ssrA gene; the 2 termini fold to resemble tRNA(Ala) and it encodes a 'tag peptide', a short internal open reading frame. During trans-translation Ala-aminoacylated tmRNA acts like a tRNA, entering the A-site of stalled ribosomes, displacing the stalled mRNA. The ribosome then switches to translate the ORF on the tmRNA; the nascent peptide is terminated with the 'tag peptide' encoded by the tmRNA and targeted for degradation. The ribosome is freed to recommence translation, which seems to be the essential function of trans-translation. The polypeptide is SsrA-binding protein (Coxiella burnetii (strain RSA 493 / Nine Mile phase I)).